A 202-amino-acid chain; its full sequence is Cytochrome c biogenesis ATP-binding export protein CcmA (202 aa).

Residues 3–200 (LAAENLSGER…EGTQELKMGA (198 aa)) form the ABC transporter domain. Position 35–42 (35–42 (GPNGAGKS)) interacts with ATP.

Belongs to the ABC transporter superfamily. CcmA exporter (TC 3.A.1.107) family. As to quaternary structure, the complex is composed of two ATP-binding proteins (CcmA) and two transmembrane proteins (CcmB).

It localises to the cell inner membrane. It carries out the reaction heme b(in) + ATP + H2O = heme b(out) + ADP + phosphate + H(+). Functionally, part of the ABC transporter complex CcmAB involved in the biogenesis of c-type cytochromes; once thought to export heme, this seems not to be the case, but its exact role is uncertain. Responsible for energy coupling to the transport system. This Chelativorans sp. (strain BNC1) protein is Cytochrome c biogenesis ATP-binding export protein CcmA.